We begin with the raw amino-acid sequence, 466 residues long: GTPase Der (466 aa).

EngA-type G domains are found at residues 30–193 (PVVA…PEVS) and 203–376 (RRVA…ASWD). GTP is bound by residues 36-43 (GRPNVGKS), 83-87 (DTGGW), 145-148 (NKVD), 209-216 (GKPNVGKS), 256-260 (DTAGL), and 321-324 (NKWD). Residues 377–459 (TRIATGPLNS…PIRINVRVRE (83 aa)) form the KH-like domain.

It belongs to the TRAFAC class TrmE-Era-EngA-EngB-Septin-like GTPase superfamily. EngA (Der) GTPase family. Associates with the 50S ribosomal subunit.

Its function is as follows. GTPase that plays an essential role in the late steps of ribosome biogenesis. This is GTPase Der from Mycobacterium avium (strain 104).